A 166-amino-acid polypeptide reads, in one-letter code: MLVIHRRIDPQPVWAAELHLTFEARSKSRLRCFSAEGEDVGLFLERGQPPLYDGECLQAEDGRIVRVCARPEQLLHVTCANAFELTRAAYHLGNRHVALQVGDGWLRLLDDYVLKAMLEQLGAQVESIEAPFQPEHGAYGGGHHHSRHGDEDFNYAPKLHQFGVRL.

Belongs to the UreE family.

It is found in the cytoplasm. In terms of biological role, involved in urease metallocenter assembly. Binds nickel. Probably functions as a nickel donor during metallocenter assembly. This chain is Urease accessory protein UreE, found in Pseudomonas fluorescens (strain Pf0-1).